The sequence spans 408 residues: Argininosuccinate synthase (408 aa).

ATP contacts are provided by residues 10–18 (AYSGGLDTS) and A37. Residues Y90 and S95 each coordinate L-citrulline. G120 provides a ligand contact to ATP. L-aspartate-binding residues include T122, N126, and D127. N126 is a binding site for L-citrulline. Positions 130, 182, 191, 267, and 279 each coordinate L-citrulline.

The protein belongs to the argininosuccinate synthase family. Type 1 subfamily. In terms of assembly, homotetramer.

The protein resides in the cytoplasm. It carries out the reaction L-citrulline + L-aspartate + ATP = 2-(N(omega)-L-arginino)succinate + AMP + diphosphate + H(+). The protein operates within amino-acid biosynthesis; L-arginine biosynthesis; L-arginine from L-ornithine and carbamoyl phosphate: step 2/3. The polypeptide is Argininosuccinate synthase (Paraburkholderia xenovorans (strain LB400)).